The sequence spans 362 residues: 3-isopropylmalate dehydrogenase (362 aa).

77–88 (GPKWGTGAVRPE) serves as a coordination point for NAD(+). Substrate contacts are provided by Arg95, Arg105, Arg134, and Asp223. Mg(2+) is bound by residues Asp223, Asp248, and Asp252. 287 to 298 (GSAPDLPPNKVN) is a binding site for NAD(+).

Belongs to the isocitrate and isopropylmalate dehydrogenases family. Homodimer. Requires Mg(2+) as cofactor. Mn(2+) serves as cofactor.

It localises to the cytoplasm. The enzyme catalyses (2R,3S)-3-isopropylmalate + NAD(+) = 4-methyl-2-oxopentanoate + CO2 + NADH. Its pathway is amino-acid biosynthesis; L-leucine biosynthesis; L-leucine from 3-methyl-2-oxobutanoate: step 3/4. Its function is as follows. Catalyzes the oxidation of 3-carboxy-2-hydroxy-4-methylpentanoate (3-isopropylmalate) to 3-carboxy-4-methyl-2-oxopentanoate. The product decarboxylates to 4-methyl-2 oxopentanoate. The polypeptide is 3-isopropylmalate dehydrogenase (LEU2) (Blastobotrys adeninivorans (Yeast)).